The chain runs to 165 residues: Large ribosomal subunit protein uL10 (165 aa).

It belongs to the universal ribosomal protein uL10 family. In terms of assembly, part of the ribosomal stalk of the 50S ribosomal subunit. The N-terminus interacts with L11 and the large rRNA to form the base of the stalk. The C-terminus forms an elongated spine to which L12 dimers bind in a sequential fashion forming a multimeric L10(L12)X complex.

In terms of biological role, forms part of the ribosomal stalk, playing a central role in the interaction of the ribosome with GTP-bound translation factors. This is Large ribosomal subunit protein uL10 from Burkholderia multivorans (strain ATCC 17616 / 249).